The primary structure comprises 74 residues: MPKYYEDKPQGGACGGLKEDLGACLLESDCVVQEGKSPRQCLKEGYCNSLKYAFFECKRSVLDNRARFRGRKGY.

Residues 27-65 enclose the CHCH domain; sequence ESDCVVQEGKSPRQCLKEGYCNSLKYAFFECKRSVLDNR. The Cx10C motif signature appears at 30–41; the sequence is CVVQEGKSPRQC. 2 cysteine pairs are disulfide-bonded: cysteine 30–cysteine 57 and cysteine 41–cysteine 47. A Phosphoserine modification is found at serine 37. A Cx9C motif motif is present at residues 47–57; sequence CNSLKYAFFEC.

It belongs to the PET191 family.

Its function is as follows. Involved in an early step of the mitochondrial complex IV assembly process. The chain is Cytochrome c oxidase assembly factor 5 (Coa5) from Pongo abelii (Sumatran orangutan).